We begin with the raw amino-acid sequence, 105 residues long: Ig lambda chain C region (105 aa).

An Ig-like domain is found at 6–100 (PSVILFPPSS…EGHTVEKSLA (95 aa)). An intrachain disulfide couples cysteine 27 to cysteine 86.

The protein is Ig lambda chain C region of Oryctolagus cuniculus (Rabbit).